A 146-amino-acid chain; its full sequence is Lipoprotein signal peptidase (146 aa).

The next 3 helical transmembrane spans lie at 10–30 (GLFVLVFAIDQAIKALILGGF), 54–74 (FLEGWLKYIQLGMLGGILLFL), and 80–100 (FFVAHYLPLSILLAAGFSNIL). Catalysis depends on residues D110 and D127. Residues 118-138 (FEFAIFNFADVMIDVAVALFL) traverse the membrane as a helical segment.

Belongs to the peptidase A8 family.

Its subcellular location is the cell inner membrane. It catalyses the reaction Release of signal peptides from bacterial membrane prolipoproteins. Hydrolyzes -Xaa-Yaa-Zaa-|-(S,diacylglyceryl)Cys-, in which Xaa is hydrophobic (preferably Leu), and Yaa (Ala or Ser) and Zaa (Gly or Ala) have small, neutral side chains.. Its pathway is protein modification; lipoprotein biosynthesis (signal peptide cleavage). In terms of biological role, this protein specifically catalyzes the removal of signal peptides from prolipoproteins. The polypeptide is Lipoprotein signal peptidase (Wolinella succinogenes (strain ATCC 29543 / DSM 1740 / CCUG 13145 / JCM 31913 / LMG 7466 / NCTC 11488 / FDC 602W) (Vibrio succinogenes)).